A 508-amino-acid chain; its full sequence is Photosystem II CP47 reaction center protein (508 aa).

The next 6 membrane-spanning stretches (helical) occupy residues 21 to 36 (SVHI…WAGS), 101 to 115 (IVFS…IWHW), 140 to 156 (GIHL…FGAF), 203 to 218 (IAAG…FHLS), 237 to 252 (VLSS…AFVV), and 457 to 472 (SFAL…HGAR).

It belongs to the PsbB/PsbC family. PsbB subfamily. In terms of assembly, PSII is composed of 1 copy each of membrane proteins PsbA, PsbB, PsbC, PsbD, PsbE, PsbF, PsbH, PsbI, PsbJ, PsbK, PsbL, PsbM, PsbT, PsbX, PsbY, PsbZ, Psb30/Ycf12, at least 3 peripheral proteins of the oxygen-evolving complex and a large number of cofactors. It forms dimeric complexes. Binds multiple chlorophylls. PSII binds additional chlorophylls, carotenoids and specific lipids. serves as cofactor.

The protein resides in the plastid. It localises to the chloroplast thylakoid membrane. Functionally, one of the components of the core complex of photosystem II (PSII). It binds chlorophyll and helps catalyze the primary light-induced photochemical processes of PSII. PSII is a light-driven water:plastoquinone oxidoreductase, using light energy to abstract electrons from H(2)O, generating O(2) and a proton gradient subsequently used for ATP formation. This Manihot esculenta (Cassava) protein is Photosystem II CP47 reaction center protein.